Consider the following 918-residue polypeptide: MENDLSFGEDVMSYEEESDSAFPSPIRPTPPGHSGNYDLEQSRQEEDSNQAIQSIVVHTDPEAYLNLNTNANTRGDAQAYVELNELMGNSWQETGRWVGYEENFNPGTGKWGPSHVSYLTFKSLIQLRKIMSTGAIILDLQASSLSAVAEKVVDELRTKGEIRAADRDGLLRALLQRRSQSEGAVAQPLGGDIEMQTFSVTKQRDTTDSVEASIVLSGVMDSLEKPAVAFVRLGDSVVIEGALEAPVPVRFVFVLVGPSQGGVDYHESGRAMAALMADWVFSLEAYLAPTNKELTNAIADFMDCGIVIPPTEIQDEGMLQPIIDFQKKMLKDRLRPSDTRIIFGGGAKADEADEEPREDPLARTGIPFGGMIKDMKRRYRHYISDFTDALDPQVLAAVIFIYFAALSPAITFGGLLADKTEHMMGVSELMISTCVQGIIFAFIAAQPTLVIGFSGPLLVFEEAFFAFCKSQEIEYIVGRIWVGLWLVIIVVVIVAVEGSFLVKFISRFTQEIFSILISLIFIYETFSKLGKIFKAHPLVLNYEHLNDSLDNPFHPVVKEHIEYHEDGNKTVHEVIHERAYPNTALLSMCLMFGCFFIAYFLRQFKNGHFLPGPIRRMIGDFGVPIAIFFMIAVDITIEDAYTQKLVVPKGLMVSNPNARGWFINPLGEKKPFPAWMMGACCVPALLVFILIFLESQITTLIVSKPERKMVKGSGFHLDLLILVTMGGIASLFGVPWLSAATVRSVTHANALTVMSKGPKPEIEKVLEQRISGMLVAAMVGVSILLEPILKMIPMTALFGIFLYMGITSLSGIQMWDRMLLLIVPRKYYPADAYAQRVTTMKMHLFTLIQMVCLGALWMVKMSAFSLALPFVLILTIPLRMAITGTLFTDKEMKCLDASDGKVKFEEEPGEDMYESPLP.

The segment at 1–48 (MENDLSFGEDVMSYEEESDSAFPSPIRPTPPGHSGNYDLEQSRQEEDS) is disordered. Residues 1–392 (MENDLSFGED…ISDFTDALDP (392 aa)) are Cytoplasmic-facing. The chain crosses the membrane as a helical span at residues 393–416 (QVLAAVIFIYFAALSPAITFGGLL). Residues 417–424 (ADKTEHMM) are Extracellular-facing. A helical membrane pass occupies residues 425–445 (GVSELMISTCVQGIIFAFIAA). Topologically, residues 446-448 (QPT) are cytoplasmic. The discontinuously helical transmembrane segment at 449–465 (LVIGFSGPLLVFEEAFF) threads the bilayer. Residues 466-474 (AFCKSQEIE) lie on the Extracellular side of the membrane. Residues 475–495 (YIVGRIWVGLWLVIIVVVIVA) traverse the membrane as a helical segment. Residues 496–507 (VEGSFLVKFISR) lie on the Cytoplasmic side of the membrane. Residues 508 to 530 (FTQEIFSILISLIFIYETFSKLG) traverse the membrane as a helical segment. Over 531–583 (KIFKAHPLVLNYEHLNDSLDNPFHPVVKEHIEYHEDGNKTVHEVIHERAYPNT) the chain is Extracellular. Asn546 and Asn568 each carry an N-linked (GlcNAc...) asparagine glycan. A helical transmembrane segment spans residues 584-604 (ALLSMCLMFGCFFIAYFLRQF). Residues 605-615 (KNGHFLPGPIR) lie on the Cytoplasmic side of the membrane. Residues 616–636 (RMIGDFGVPIAIFFMIAVDIT) traverse the membrane as a helical segment. Topologically, residues 637–676 (IEDAYTQKLVVPKGLMVSNPNARGWFINPLGEKKPFPAWM) are extracellular. A helical membrane pass occupies residues 677–697 (MGACCVPALLVFILIFLESQI). At 698–713 (TTLIVSKPERKMVKGS) the chain is on the cytoplasmic side. The chain crosses the membrane as a helical span at residues 714–732 (GFHLDLLILVTMGGIASLF). Residues 733-750 (GVPWLSAATVRSVTHANA) form a discontinuously helical membrane-spanning segment. Topologically, residues 751-769 (LTVMSKGPKPEIEKVLEQR) are cytoplasmic. Helical transmembrane passes span 770–790 (ISGM…PILK) and 791–809 (MIPM…ITSL). The Cytoplasmic portion of the chain corresponds to 810 to 847 (SGIQMWDRMLLLIVPRKYYPADAYAQRVTTMKMHLFTL). The segment at residues 848–878 (IQMVCLGALWMVKMSAFSLALPFVLILTIPL) is an intramembrane region (discontinuously helical). The S-palmitoyl cysteine moiety is linked to residue Cys852. Residues 879–918 (RMAITGTLFTDKEMKCLDASDGKVKFEEEPGEDMYESPLP) are Cytoplasmic-facing.

It belongs to the anion exchanger (TC 2.A.31) family. In terms of assembly, a dimer in solution, it spans the membrane asymmetrically and appears to be tetrameric.

It localises to the cell membrane. The enzyme catalyses hydrogencarbonate(in) + chloride(out) = hydrogencarbonate(out) + chloride(in). Functionally, functions both as a transporter that mediates electroneutral anion exchange across the cell membrane and as a structural protein. Major integral membrane glycoprotein of the erythrocyte membrane; required for normal flexibility and stability of the erythrocyte membrane and for normal erythrocyte shape via the interactions of its cytoplasmic domain with cytoskeletal proteins, glycolytic enzymes, and hemoglobin. Functions as a transporter that mediates the 1:1 exchange of inorganic anions across the erythrocyte membrane. Mediates chloride-bicarbonate exchange in the kidney, and is required for normal acidification of the urine. The protein is Band 3 anion exchange protein (slc4a1) of Oncorhynchus mykiss (Rainbow trout).